A 734-amino-acid chain; its full sequence is Photosystem I P700 chlorophyll a apoprotein A2 (734 aa).

8 helical membrane-spanning segments follow: residues 46 to 69 (IFAS…FHVA), 135 to 158 (LYAG…LHLQ), 175 to 199 (LNHH…HVAI), 273 to 291 (IAHH…GHMY), 330 to 353 (LHFQ…QHMY), 369 to 395 (SALY…IFFV), 417 to 439 (AIIS…IYVH), and 517 to 535 (FLIH…LILV). 2 residues coordinate [4Fe-4S] cluster: cysteine 559 and cysteine 568. Transmembrane regions (helical) follow at residues 575–596 (AFYL…YWHW) and 643–665 (LSVW…MFLI). Positions 654, 662, and 670 each coordinate chlorophyll a. Tryptophan 671 contacts phylloquinone. A helical membrane pass occupies residues 707-727 (LVGLIHFTAGYIFTYAAFVIA).

It belongs to the PsaA/PsaB family. The PsaA/B heterodimer binds the P700 chlorophyll special pair and subsequent electron acceptors. PSI consists of a core antenna complex that captures photons, and an electron transfer chain that converts photonic excitation into a charge separation. The eukaryotic PSI reaction center is composed of at least 11 subunits. P700 is a chlorophyll a/chlorophyll a' dimer, A0 is one or more chlorophyll a, A1 is one or both phylloquinones and FX is a shared 4Fe-4S iron-sulfur center. serves as cofactor.

The protein localises to the plastid. Its subcellular location is the chloroplast thylakoid membrane. The catalysed reaction is reduced [plastocyanin] + hnu + oxidized [2Fe-2S]-[ferredoxin] = oxidized [plastocyanin] + reduced [2Fe-2S]-[ferredoxin]. In terms of biological role, psaA and PsaB bind P700, the primary electron donor of photosystem I (PSI), as well as the electron acceptors A0, A1 and FX. PSI is a plastocyanin/cytochrome c6-ferredoxin oxidoreductase, converting photonic excitation into a charge separation, which transfers an electron from the donor P700 chlorophyll pair to the spectroscopically characterized acceptors A0, A1, FX, FA and FB in turn. Oxidized P700 is reduced on the lumenal side of the thylakoid membrane by plastocyanin or cytochrome c6. The protein is Photosystem I P700 chlorophyll a apoprotein A2 of Rhodomonas salina (Cryptomonas salina).